Here is a 129-residue protein sequence, read N- to C-terminus: Small ribosomal subunit protein uS11 (129 aa).

The protein belongs to the universal ribosomal protein uS11 family. Part of the 30S ribosomal subunit. Interacts with proteins S7 and S18. Binds to IF-3.

Functionally, located on the platform of the 30S subunit, it bridges several disparate RNA helices of the 16S rRNA. Forms part of the Shine-Dalgarno cleft in the 70S ribosome. The protein is Small ribosomal subunit protein uS11 of Cereibacter sphaeroides (strain ATCC 17029 / ATH 2.4.9) (Rhodobacter sphaeroides).